The sequence spans 406 residues: MPPVVGKKAKKGILERLNAGEIVIGDGGFVFALEKRGYVKAGPWTPEAAVEHPEAVRQLHREFLRAGSNVMQTFTFYASEDKLENRGNYVLEKISGQKVNEAACDIARQVADEGDALVAGGVSQTPSYLSCKSETEVKKVFLQQLEVFMKKNVDFLIAEYFEHVEEAVWAVETLIASGKPVAATMCIGPEGDLHGVPPGECAVRLVKAGASIIGVNCHFDPTISLKTVKLMKEGLEAARLKAHLMSQPLAYHTPDCNKQGFIDLPEFPFGLEPRVATRWDIQKYAREAYNMGIRYIGGCCGFEPYHIRAIAEELAPERGFLPPASEKHGSWGSALDMHTKPWVRARARKEYWENLRIASGRPYNPSMSKPDGWGVTKGTAELMQQKEATTEQQLKELFEKQKFKLQ.

The 304-residue stretch at 11–314 (KGILERLNAG…YHIRAIAEEL (304 aa)) folds into the Hcy-binding domain. N6-succinyllysine is present on residues lysine 40, lysine 93, and lysine 98. Residue cysteine 217 coordinates Zn(2+). N6-succinyllysine occurs at positions 232 and 241. 2 residues coordinate Zn(2+): cysteine 299 and cysteine 300. Serine 330 carries the phosphoserine modification. 2 positions are modified to N6-succinyllysine: lysine 340 and lysine 377.

Homotetramer. The cofactor is Zn(2+).

It is found in the cytoplasm. It localises to the cytosol. The protein resides in the nucleus. It catalyses the reaction L-homocysteine + glycine betaine = N,N-dimethylglycine + L-methionine. The protein operates within amine and polyamine degradation; betaine degradation; sarcosine from betaine: step 1/2. It participates in amino-acid biosynthesis; L-methionine biosynthesis via de novo pathway; L-methionine from L-homocysteine (BhmT route): step 1/1. Involved in the regulation of homocysteine metabolism. Converts betaine and homocysteine to dimethylglycine and methionine, respectively. This reaction is also required for the irreversible oxidation of choline. This chain is Betaine--homocysteine S-methyltransferase 1 (BHMT), found in Pongo abelii (Sumatran orangutan).